Here is a 97-residue protein sequence, read N- to C-terminus: Sugar transporter SemiSWEET (97 aa).

A PQ-loop domain is found at 4 to 70 (IERIGKALEP…IYGIYHKNPT (67 aa)). 3 consecutive transmembrane segments (helical) span residues 15-35 (MLVMGLISPLATMPQLYKLYV), 44-65 (LSLTTWLLYSFIALLWTIYGIY), and 71-91 (IWVGNCLGFLMYVAMVVGIIA).

In terms of assembly, homodimer.

It is found in the cell membrane. Its function is as follows. The homodimer mediates transmembrane sugar transport down a concentration gradient. Transport is probably effected by rocking-type movements, where a cargo-binding cavity opens first on one and then on the other side of the membrane. The sequence is that of Sugar transporter SemiSWEET from Vibrio sp. (strain N418).